A 108-amino-acid polypeptide reads, in one-letter code: MSAVNAQTKYDEGRLMQVLVAPIVSEKATMIAEKSNSVTFKVLQDATKYEIKAAVELMFKVNVKAVAVLNIKGKTKRFGKSVGRRDNLRKAYVTLQAGQELNLGGESA.

This sequence belongs to the universal ribosomal protein uL23 family. As to quaternary structure, part of the 50S ribosomal subunit. Contacts protein L29, and trigger factor when it is bound to the ribosome.

Functionally, one of the early assembly proteins it binds 23S rRNA. One of the proteins that surrounds the polypeptide exit tunnel on the outside of the ribosome. Forms the main docking site for trigger factor binding to the ribosome. The protein is Large ribosomal subunit protein uL23 of Polaromonas naphthalenivorans (strain CJ2).